Consider the following 215-residue polypeptide: Polysialic acid O-acetyltransferase (215 aa).

Acetyl-CoA-binding positions include 119-121, R148, K154, S166, 171-172, and K190; these read DMH and YK.

It belongs to the transferase hexapeptide repeat family. As to quaternary structure, homotrimer.

It carries out the reaction [(2-&gt;6)-alpha-D-glucosyl-(1-&gt;4)-N-acetyl-alpha-D-neuraminosyl](n) + n acetyl-CoA = [(2-&gt;6)-alpha-D-glucosyl-(1-&gt;4)-N,7-O-diacetyl-alpha-D-neuraminosyl](n) + n CoA. The catalysed reaction is [(2-&gt;6)-alpha-D-glucosyl-(1-&gt;4)-N-acetyl-alpha-D-neuraminosyl](n) + n acetyl-CoA = [(2-&gt;6)-alpha-D-glucosyl-(1-&gt;4)-N,O(9)-diacetyl-alpha-D-neuraminosyl](n) + n CoA. Its function is as follows. Catalyzes the O-acetylation of capsular polymeric sialic acid consisting of polymers of (2-&gt;6)-alpha-D-glucosyl-(1-&gt;4)-N-acetyl-alpha-D-neuraminosyl residues. Shows high substrate specificity toward polymers of sialic acid that contains a large number of residues. The sequence is that of Polysialic acid O-acetyltransferase from Neisseria meningitidis.